We begin with the raw amino-acid sequence, 97 residues long: Acylphosphatase-2 (97 aa).

Ala-2 is modified (N-acetylalanine). In terms of domain architecture, Acylphosphatase-like spans 7-97 (SVDYEVFGTV…LEYSNFSIRY (91 aa)). Residues Arg-22 and Asn-40 contribute to the active site. A Phosphoserine modification is found at Ser-91.

It belongs to the acylphosphatase family.

The enzyme catalyses an acyl phosphate + H2O = a carboxylate + phosphate + H(+). In terms of biological role, its physiological role is not yet clear. This is Acylphosphatase-2 (Acyp2) from Rattus norvegicus (Rat).